The sequence spans 321 residues: Anthranilate phosphoribosyltransferase (321 aa).

5-phospho-alpha-D-ribose 1-diphosphate-binding positions include Gly72, 75-76 (GD), Thr80, 82-85 (NVST), 99-107 (KHGNVSITS), and Ser111. Position 72 (Gly72) interacts with anthranilate. Residue Ser84 coordinates Mg(2+). Asn102 lines the anthranilate pocket. Arg157 provides a ligand contact to anthranilate. Positions 216 and 217 each coordinate Mg(2+).

Belongs to the anthranilate phosphoribosyltransferase family. As to quaternary structure, homodimer. Requires Mg(2+) as cofactor.

The catalysed reaction is N-(5-phospho-beta-D-ribosyl)anthranilate + diphosphate = 5-phospho-alpha-D-ribose 1-diphosphate + anthranilate. The protein operates within amino-acid biosynthesis; L-tryptophan biosynthesis; L-tryptophan from chorismate: step 2/5. In terms of biological role, catalyzes the transfer of the phosphoribosyl group of 5-phosphorylribose-1-pyrophosphate (PRPP) to anthranilate to yield N-(5'-phosphoribosyl)-anthranilate (PRA). This is Anthranilate phosphoribosyltransferase from Methanococcus maripaludis (strain C5 / ATCC BAA-1333).